Here is a 446-residue protein sequence, read N- to C-terminus: N-succinylarginine dihydrolase (446 aa).

Residues 19–28 (AGLSYGNVAS), Asn-110, and 137–138 (HR) contribute to the substrate site. Glu-174 is an active-site residue. Arg-214 contacts substrate. The active site involves His-250. Residues Asp-252 and Asn-363 each contribute to the substrate site. Residue Cys-369 is the Nucleophile of the active site.

This sequence belongs to the succinylarginine dihydrolase family. In terms of assembly, homodimer.

The enzyme catalyses N(2)-succinyl-L-arginine + 2 H2O + 2 H(+) = N(2)-succinyl-L-ornithine + 2 NH4(+) + CO2. The protein operates within amino-acid degradation; L-arginine degradation via AST pathway; L-glutamate and succinate from L-arginine: step 2/5. Its function is as follows. Catalyzes the hydrolysis of N(2)-succinylarginine into N(2)-succinylornithine, ammonia and CO(2). The chain is N-succinylarginine dihydrolase from Pseudoalteromonas atlantica (strain T6c / ATCC BAA-1087).